Reading from the N-terminus, the 492-residue chain is Probable G-protein coupled receptor Mth-like 8 (492 aa).

The signal sequence occupies residues 1–21 (MAQFCILGVLLILSGTHCSWG). At 22 to 218 (FHEETHYPCA…FVLGVREWTY (197 aa)) the chain is on the extracellular side. Cystine bridges form between cysteine 30–cysteine 82, cysteine 84–cysteine 89, cysteine 93–cysteine 184, and cysteine 94–cysteine 107. N-linked (GlcNAc...) asparagine glycans are attached at residues asparagine 37 and asparagine 51. N-linked (GlcNAc...) asparagine glycans are attached at residues asparagine 129, asparagine 169, and asparagine 192. The chain crosses the membrane as a helical span at residues 219–239 (AICLLIAILSMFIVLMVYLMC). Over 240–245 (SEMRNS) the chain is Cytoplasmic. The chain crosses the membrane as a helical span at residues 246 to 266 (FYGVAIKAYAICMILGYALLA). Residues 267-282 (YLTLHNPANLSNAACR) are Extracellular-facing. Asparagine 275 carries an N-linked (GlcNAc...) asparagine glycan. A helical transmembrane segment spans residues 283–303 (ILPSLALMNLVLSFYILSFIA). The Cytoplasmic segment spans residues 304 to 317 (FKLYLSFYGVVFTK). The chain crosses the membrane as a helical span at residues 318-338 (LMFWLIFTPIVLVAVGWSFFV). Over 339–362 (GFSYYGSRLIFGGDTCWFDPRNWS) the chain is Extracellular. N-linked (GlcNAc...) asparagine glycosylation is present at asparagine 360. Residues 363–383 (VMIYFYAPVFVACAISGFFYV) traverse the membrane as a helical segment. Residues 384 to 411 (LSQIYIRDQPDIETEKSFESIEKNRFKS) are Cytoplasmic-facing. A helical transmembrane segment spans residues 412–432 (FWKYFGYTAVVWVVCICSFAF). The Extracellular segment spans residues 433–441 (NYYWENRSH). The N-linked (GlcNAc...) asparagine glycan is linked to asparagine 438. The chain crosses the membrane as a helical span at residues 442–462 (LNYAVSFCMAFHGFAALYALI). The Cytoplasmic segment spans residues 463-492 (GKNQQIQNFLRRIDNGEDTCENSVPLSSFG).

This sequence belongs to the G-protein coupled receptor 2 family. Mth subfamily.

Its subcellular location is the cell membrane. The protein is Probable G-protein coupled receptor Mth-like 8 (mthl8) of Drosophila melanogaster (Fruit fly).